The sequence spans 199 residues: Small ribosomal subunit protein mS38 (199 aa).

Belongs to the mitochondrion-specific ribosomal protein mS38 family. In terms of assembly, component of the mitochondrial small ribosomal subunit (mt-SSU). Mature mammalian 55S mitochondrial ribosomes consist of a small (28S) and a large (39S) subunit. The 28S small subunit contains a 12S ribosomal RNA (12S mt-rRNA) and 30 different proteins. The 39S large subunit contains a 16S rRNA (16S mt-rRNA), a copy of mitochondrial valine transfer RNA (mt-tRNA(Val)), which plays an integral structural role, and 52 different proteins. Interacts with Aurora-A. Ubiquitously expressed and especially highly expressed in heart, skeletal muscle and testis.

The protein localises to the mitochondrion matrix. It is found in the nucleus. Its function is as follows. May act as a negative regulator of Aurora-A kinase, by down-regulation through proteasome-dependent degradation. In Homo sapiens (Human), this protein is Small ribosomal subunit protein mS38 (AURKAIP1).